A 247-amino-acid polypeptide reads, in one-letter code: CDP-diacylglycerol pyrophosphatase (247 aa).

A helical membrane pass occupies residues 5–22 (IVLALVVSVAVAGGWLWM).

The protein belongs to the Cdh family.

The protein resides in the cell inner membrane. It catalyses the reaction a CDP-1,2-diacyl-sn-glycerol + H2O = a 1,2-diacyl-sn-glycero-3-phosphate + CMP + 2 H(+). Its pathway is phospholipid metabolism; CDP-diacylglycerol degradation; phosphatidate from CDP-diacylglycerol: step 1/1. This is CDP-diacylglycerol pyrophosphatase from Enterobacter sp. (strain 638).